The primary structure comprises 267 residues: Tryptophan synthase alpha chain (267 aa).

Active-site proton acceptor residues include glutamate 49 and aspartate 60.

This sequence belongs to the TrpA family. As to quaternary structure, tetramer of two alpha and two beta chains.

The catalysed reaction is (1S,2R)-1-C-(indol-3-yl)glycerol 3-phosphate + L-serine = D-glyceraldehyde 3-phosphate + L-tryptophan + H2O. It functions in the pathway amino-acid biosynthesis; L-tryptophan biosynthesis; L-tryptophan from chorismate: step 5/5. In terms of biological role, the alpha subunit is responsible for the aldol cleavage of indoleglycerol phosphate to indole and glyceraldehyde 3-phosphate. In Salinispora tropica (strain ATCC BAA-916 / DSM 44818 / JCM 13857 / NBRC 105044 / CNB-440), this protein is Tryptophan synthase alpha chain.